The following is a 381-amino-acid chain: E3 ubiquitin-protein ligase KCMF1 (381 aa).

The residue at position 2 (Ser2) is an N-acetylserine. Ser2 bears the Phosphoserine mark. A ZZ-type zinc finger spans residues 4 to 60 (HEGVSCDACLKGNFRGRRYKCLICYDYDLCASCYESGATTTRHTTDHPMQCILTRVD). Residues Cys9, Cys12, Cys24, Cys27, Cys33, Cys36, His46, and His50 each contribute to the Zn(2+) site. A C2H2-type zinc finger spans residues 78 to 101 (FTCPYCGKMGYTETSLQEHVTSEH). The interval 154–193 (MFHPGRGLGGPRARRSNMHFTSSSTGGLSSSQSSYSPSNR) is disordered. Phosphoserine occurs at positions 169, 189, and 212. The segment covering 175–191 (SSSTGGLSSSQSSYSPS) has biased composition (low complexity). A coiled-coil region spans residues 225 to 257 (SQLQQLQMQLQLERQHAQAARQQLETARNATRR). The tract at residues 294–314 (TRLNDPKMSETERQSMESERA) is disordered. Over residues 297–314 (NDPKMSETERQSMESERA) the composition is skewed to basic and acidic residues. Phosphoserine occurs at positions 335 and 336.

This sequence belongs to the KCMF1 family. As to quaternary structure, component of the SIFI complex, composed of KCMF1, UBR4 and calmodulin (CALM1, CALM2 or CALM3). In terms of tissue distribution, spleen, small intestine, ovary, peripheral blood, lung, kidney and pancreas. Expressed at low levels in the thymus, prostate, testis, colon, heart, brain, placenta and liver.

The protein localises to the cytoplasm. The protein resides in the late endosome. It localises to the lysosome. It carries out the reaction S-ubiquitinyl-[E2 ubiquitin-conjugating enzyme]-L-cysteine + [acceptor protein]-L-lysine = [E2 ubiquitin-conjugating enzyme]-L-cysteine + N(6)-ubiquitinyl-[acceptor protein]-L-lysine.. The protein operates within protein modification; protein ubiquitination. Its function is as follows. E3 ubiquitin-protein ligase which accepts ubiquitin from an E2 ubiquitin-conjugating enzyme and then transfers it to targeted substrates, promoting their degradation by the proteasome. Together with UBR4, component of the N-end rule pathway: ubiquitinates proteins bearing specific N-terminal residues that are destabilizing according to the N-end rule, leading to their degradation. Does not ubiquitinate proteins that are acetylated at the N-terminus. Together with UBR4, part of a protein quality control pathway that catalyzes ubiquitination and degradation of proteins that have been oxidized in response to reactive oxygen species (ROS): recognizes proteins with an Arg-CysO3(H) degron at the N-terminus, and mediates assembly of heterotypic 'Lys-63'-/'Lys-27'-linked branched ubiquitin chains on oxidized proteins, leading to their degradation by autophagy. Catalytic component of the SIFI complex, a multiprotein complex required to inhibit the mitochondrial stress response after a specific stress event has been resolved: ubiquitinates and degrades (1) components of the HRI-mediated signaling of the integrated stress response, such as DELE1 and EIF2AK1/HRI, as well as (2) unimported mitochondrial precursors. Within the SIFI complex, UBR4 initiates ubiquitin chain that are further elongated or branched by KCMF1. This chain is E3 ubiquitin-protein ligase KCMF1, found in Homo sapiens (Human).